The following is a 398-amino-acid chain: Polyferredoxin protein VhuB (398 aa).

4Fe-4S ferredoxin-type domains follow at residues 2–31, 25–53, 54–83, 82–111, 123–152, 152–181, 191–219, 220–249, 259–291, 300–331, and 339–368; these read AGIK…IAPF, AIEI…VENN, GKLI…VDDR, DRFP…IPGK, QEPI…IEDE, ELAV…VAGK, KSFT…YNRE, DLIV…LEVE, EGLV…MINQ, TKTD…MGKI, and NRIE…LTGD. The [4Fe-4S] cluster site is built by Cys11, Cys14, Cys17, Cys21, Cys34, Cys37, Cys40, Cys44, Cys63, Cys66, Cys69, Cys73, Cys91, Cys94, Cys97, Cys101, Cys132, Cys135, Cys138, Cys142, Cys161, Cys164, Cys167, Cys171, Cys199, Cys202, Cys205, Cys209, Cys229, Cys232, Cys235, Cys239, Cys268, Cys271, Cys274, Cys278, Cys311, Cys314, Cys317, Cys321, Cys348, Cys351, Cys354, Cys358, Cys377, Cys380, Cys383, and Cys387.

Requires [4Fe-4S] cluster as cofactor.

The chain is Polyferredoxin protein VhuB (vhuB) from Methanococcus voltae.